The chain runs to 172 residues: Translation initiation factor IF-3 (172 aa).

It belongs to the IF-3 family. In terms of assembly, monomer.

It localises to the cytoplasm. Functionally, IF-3 binds to the 30S ribosomal subunit and shifts the equilibrium between 70S ribosomes and their 50S and 30S subunits in favor of the free subunits, thus enhancing the availability of 30S subunits on which protein synthesis initiation begins. In Thermotoga maritima (strain ATCC 43589 / DSM 3109 / JCM 10099 / NBRC 100826 / MSB8), this protein is Translation initiation factor IF-3.